Reading from the N-terminus, the 464-residue chain is Soluble pyridine nucleotide transhydrogenase (464 aa).

35–44 lines the FAD pocket; that stretch reads DSRREVGGNC.

It belongs to the class-I pyridine nucleotide-disulfide oxidoreductase family. FAD is required as a cofactor.

Its subcellular location is the cytoplasm. The enzyme catalyses NAD(+) + NADPH = NADH + NADP(+). In terms of biological role, conversion of NADPH, generated by peripheral catabolic pathways, to NADH, which can enter the respiratory chain for energy generation. The sequence is that of Soluble pyridine nucleotide transhydrogenase from Pseudomonas syringae pv. tomato (strain ATCC BAA-871 / DC3000).